A 318-amino-acid polypeptide reads, in one-letter code: Glycerol 2-dehydrogenase (NADP(+)) (318 aa).

The active-site Proton donor is the tyrosine 52. Histidine 115 lines the substrate pocket. 217-277 (SPLGSQNQVP…SSTPSRIESN (61 aa)) contributes to the NADP(+) binding site.

This sequence belongs to the aldo/keto reductase family.

The catalysed reaction is glycerol + NADP(+) = dihydroxyacetone + NADPH + H(+). Its function is as follows. Glycerol oxidoreductase probably involved in glycerol synthesis. The protein is Glycerol 2-dehydrogenase (NADP(+)) (gld2) of Hypocrea jecorina (Trichoderma reesei).